The following is an 891-amino-acid chain: Fanconi-associated nuclease 1 homolog (891 aa).

The Mn(2+) site is built by Glu-712, Asp-833, Glu-852, and Val-853. The region spanning 770 to 884 is the VRR-NUC domain; it reads GMAEEILIIS…GFNVEICKVR (115 aa).

Belongs to the FAN1 family. It depends on Mn(2+) as a cofactor. Requires Mg(2+) as cofactor.

Its subcellular location is the nucleus. It carries out the reaction Hydrolytically removes 5'-nucleotides successively from the 3'-hydroxy termini of 3'-hydroxy-terminated oligonucleotides.. Functionally, nuclease required for the repair of DNA interstrand cross-links (ICLs). Acts as a 5'-3' exonuclease that anchors at a cut end of DNA and cleaves DNA successively at every third nucleotide, allowing to excise an ICL from one strand through flanking incisions. May act upstream of the helicase RECQL4A and the ATPase RAD5A, which is involved in error-free post-replicative repair. Functions independently of MUS81 pathway, but in a similar pathway with RECQ4A, RAD5A and MFH1 in ICL repair. The chain is Fanconi-associated nuclease 1 homolog from Arabidopsis thaliana (Mouse-ear cress).